The following is a 146-amino-acid chain: ATP synthase F(0) complex subunit C2, mitochondrial (146 aa).

The N-terminal 71 residues, 1-71 (MYACSKFVST…RSFQTSAISR (71 aa)), are a transit peptide targeting the mitochondrion. A helical membrane pass occupies residues 87 to 107 (VGVAGSGAGIGTVFGSLIIGY). Position 114 is an N6,N6,N6-trimethyllysine (Lys-114). The helical transmembrane segment at 122–142 (ILGFALSEAMGLFCLMVAFLI) threads the bilayer.

The protein belongs to the ATPase C chain family. In terms of assembly, F-type ATPases have 2 components, CF(1) - the catalytic core - and CF(0) - the membrane proton channel. CF(1) has five subunits: alpha(3), beta(3), gamma(1), delta(1), epsilon(1). CF(0) has three main subunits: a, b and c. Interacts with DNAJC30; interaction is direct. Post-translationally, trimethylated by ATPSCKMT at Lys-114. Methylation is required for proper incorporation of the C subunit into the ATP synthase complex and mitochondrial respiration.

The protein resides in the mitochondrion membrane. Functionally, mitochondrial membrane ATP synthase (F(1)F(0) ATP synthase or Complex V) produces ATP from ADP in the presence of a proton gradient across the membrane which is generated by electron transport complexes of the respiratory chain. F-type ATPases consist of two structural domains, F(1) - containing the extramembraneous catalytic core and F(0) - containing the membrane proton channel, linked together by a central stalk and a peripheral stalk. During catalysis, ATP synthesis in the catalytic domain of F(1) is coupled via a rotary mechanism of the central stalk subunits to proton translocation. Part of the complex F(0) domain. A homomeric c-ring of probably 10 subunits is part of the complex rotary element. This is ATP synthase F(0) complex subunit C2, mitochondrial from Mus musculus (Mouse).